The chain runs to 837 residues: Protein translocase subunit SecA 1 (837 aa).

Residues Q85, 103 to 107 (GEGKT), and D492 each bind ATP. A compositionally biased stretch (basic and acidic residues) spans 787 to 806 (QEVAKGEAVHPKEDGEEPKR). The interval 787–811 (QEVAKGEAVHPKEDGEEPKRKPVRK) is disordered. 4 residues coordinate Zn(2+): C821, C823, C832, and C833.

This sequence belongs to the SecA family. In terms of assembly, monomer and homodimer. Part of the essential Sec protein translocation apparatus which comprises SecA, SecYEG and auxiliary proteins SecDF. Other proteins may also be involved. It depends on Zn(2+) as a cofactor.

The protein resides in the cell membrane. Its subcellular location is the cytoplasm. It catalyses the reaction ATP + H2O + cellular proteinSide 1 = ADP + phosphate + cellular proteinSide 2.. Functionally, part of the Sec protein translocase complex. Interacts with the SecYEG preprotein conducting channel. Has a central role in coupling the hydrolysis of ATP to the transfer of proteins into and across the cell membrane, serving as an ATP-driven molecular motor driving the stepwise translocation of polypeptide chains across the membrane. The chain is Protein translocase subunit SecA 1 from Geobacillus kaustophilus (strain HTA426).